We begin with the raw amino-acid sequence, 343 residues long: MGEDAISGNLKNLTIDTRDSETLVVCFGEMLIDFVPTVGGVSLAEAPAFKKAPGGAPANVAVGVSRLGGSSAFIGKVGDDEFGRMLADILRLNNVDNSGMRFDHNARTALAFVTLRGDGEREFLFFRHPSADMLLLESELDKNLIQKAKIFHYGSISLIEEPCRSTQLVAMKIAKAAGSLLSYDPNLRLPLWPSEEAARKEIMSIWNLADVIKISEDEITFLTGGDDPYDDDVVLQKLFHPNLKLLVVSEGPNGCRYYTQEFKGRVGGVKVKPVDTTGAGDAFVSGLLNSLASDLTLLKDEKKLREALLFANACGAITVTERGAIPAMPSMDAVQDLLSSTRS.

The residue at position 2 (Gly2) is an N-acetylglycine.

It belongs to the carbohydrate kinase PfkB family.

The catalysed reaction is D-fructose + ATP = D-fructose 6-phosphate + ADP + H(+). It functions in the pathway glycan biosynthesis; starch biosynthesis. Functionally, may play an important role in maintaining the flux of carbon towards starch formation. This Arabidopsis thaliana (Mouse-ear cress) protein is Probable fructokinase-7.